The sequence spans 176 residues: Cytochrome c oxidase subunit 5b-1, mitochondrial (176 aa).

A mitochondrion-targeting transit peptide spans 1-55 (MWRRIVSSQLKTLAADVVAASPRRSIAATTRPVGFYLAANRSAISASSFVIPRRF). Zn(2+)-binding residues include Cys-122, Cys-146, and Cys-149. Residues 157–176 (VVGPGGPPDGHGDEDDEHHH) are disordered.

The protein belongs to the cytochrome c oxidase subunit 5B (TC 3.D.4.11) family.

It localises to the mitochondrion inner membrane. Functionally, this protein is one of the nuclear-coded polypeptide chains of cytochrome c oxidase, the terminal oxidase in mitochondrial electron transport. In Arabidopsis thaliana (Mouse-ear cress), this protein is Cytochrome c oxidase subunit 5b-1, mitochondrial (COX5B-1).